The following is a 496-amino-acid chain: MASSVLEMIKEEVTCPICLELLKEPVSADCNHSFCRACITLNYESNRNTDGKGNCPVCRVPYPFGNLRPNLHVANIVERLKGFKSIPEEEQKVNICAQHGEKLRLFCRKDMMVICWLCERSQEHRGHQTALIEEVDQEYKEKLQGALWKLMKKAKICDEWQDDLQLQRVDWENQIQINVENVQRQFKGLRDLLDSKENEELQKLKKEKKEVMEKLEESENELEDQTELVRDLISDVEHHLELSTLEMLQGANCVLRRSQSLSLQQPQTVPQKRKRTFQAPDLKGMLQVYQGLMDIQQYWVHMTLHARNNAVIAINKEKRQIQYRSYNTVPVSEIYHLGVLGYPALSSGKHYWEVDISRSDAWLLGLNDGKCAQPQLHSKEEMGIKKNLHSQIKQNVLFQPKCGYWVIGMKNPSVYKAFDECSITHNSSILVISLPDRPSRVGVFLDRKAGTLSFYDVSNCGALIYRFYDPAFPVEVYPYFNPMKCSEPMTICGPPS.

The RING-type zinc finger occupies 15 to 59; it reads CPICLELLKEPVSADCNHSFCRACITLNYESNRNTDGKGNCPVCR. The B box-type zinc-finger motif lies at 91-132; it reads QKVNICAQHGEKLRLFCRKDMMVICWLCERSQEHRGHQTALI. The Zn(2+) site is built by Cys-96, His-99, Cys-118, and His-124. Residues 173-239 adopt a coiled-coil conformation; that stretch reads NQIQINVENV…RDLISDVEHH (67 aa). The interval 205–210 is highly hydrophilic; it reads KKEKKE. The short motif at 268-276 is the Nuclear localization signal element; the sequence is TVPQKRKRT. The B30.2/SPRY domain occupies 281–496; sequence DLKGMLQVYQ…EPMTICGPPS (216 aa).

Homomultimer. Interacts with NR2C2/TAK1, TAB2 and TAB3. Does not interact with NLRP3, NLRC4 or TAB1. As to expression, highly expressed in spleen and lymph nodes (at protein level).

It is found in the cytoplasm. The protein resides in the nucleus. Functionally, trans-acting factor that regulates gene expression of interleukin 2 receptor alpha chain. May affect IL2R-alpha expression through cis-acting negative regulatory elements or through competition with proteins that bind to enhancer or activator sequences. Negatively regulates Toll-like receptor (TLR)-mediated activation of NFKB by promoting degradation of TAB2 and TAB3 and preventing TRAF6 autoubiquitination. Negatively regulates production of reactive oxygen species (ROS) which inhibits activation of the NLRP3 inflammasome complex. This, in turn, regulates activation of CASP1 and subsequent cleavage of IL1B and IL18. No activity detected against a range of retroviruses including a number of lentiviruses, gammaretroviruses and betaretroviruses. In Mus musculus (Mouse), this protein is Tripartite motif-containing protein 30A (Trim30a).